The sequence spans 534 residues: ATP synthase subunit alpha 2 (534 aa).

Position 175 to 182 (175 to 182) interacts with ATP; that stretch reads GDRQTGKT. A disordered region spans residues 506–534; that stretch reads FQPAPEPETAPKTKTDIKPKPKAAGGESS. The span at 514 to 524 shows a compositional bias: basic and acidic residues; the sequence is TAPKTKTDIKP.

Belongs to the ATPase alpha/beta chains family. F-type ATPases have 2 components, CF(1) - the catalytic core - and CF(0) - the membrane proton channel. CF(1) has five subunits: alpha(3), beta(3), gamma(1), delta(1), epsilon(1). CF(0) has three main subunits: a(1), b(2) and c(9-12). The alpha and beta chains form an alternating ring which encloses part of the gamma chain. CF(1) is attached to CF(0) by a central stalk formed by the gamma and epsilon chains, while a peripheral stalk is formed by the delta and b chains.

It localises to the cell inner membrane. It catalyses the reaction ATP + H2O + 4 H(+)(in) = ADP + phosphate + 5 H(+)(out). Its function is as follows. Produces ATP from ADP in the presence of a proton gradient across the membrane. The alpha chain is a regulatory subunit. The protein is ATP synthase subunit alpha 2 of Albidiferax ferrireducens (strain ATCC BAA-621 / DSM 15236 / T118) (Rhodoferax ferrireducens).